We begin with the raw amino-acid sequence, 277 residues long: Large ribosomal subunit protein uL2 (277 aa).

Positions 223-277 are disordered; sequence VTMNPVDHPHGGGEGRTSGGRHPVTPWGKPTKGMKTRSNKATDKFIVTSRHKRKK.

It belongs to the universal ribosomal protein uL2 family. Part of the 50S ribosomal subunit. Forms a bridge to the 30S subunit in the 70S ribosome.

One of the primary rRNA binding proteins. Required for association of the 30S and 50S subunits to form the 70S ribosome, for tRNA binding and peptide bond formation. It has been suggested to have peptidyltransferase activity; this is somewhat controversial. Makes several contacts with the 16S rRNA in the 70S ribosome. This is Large ribosomal subunit protein uL2 from Azorhizobium caulinodans (strain ATCC 43989 / DSM 5975 / JCM 20966 / LMG 6465 / NBRC 14845 / NCIMB 13405 / ORS 571).